The sequence spans 1004 residues: Hyaluronate lyase HylB (1004 aa).

An N-terminal signal peptide occupies residues 1–29 (MKNRKIWVMLVGLFTALTNGFMGTTLTFA). Catalysis depends on residues His468, Tyr477, and Arg531.

The protein belongs to the polysaccharide lyase 8 family.

The protein resides in the secreted. It carries out the reaction [hyaluronan](n) = n 3-(4-deoxy-beta-D-gluc-4-enuronosyl)-N-acetyl-D-glucosamine + H2O. The catalysed reaction is Eliminative degradation of polysaccharides containing 1,4-beta-D-hexosaminyl and 1,3-beta-D-glucuronosyl linkages to disaccharides containing 4-deoxy-beta-D-gluc-4-enuronosyl groups.. Degrades hyaluronic acid (HA) and chondroitin sulfate (CS) A in vitro. Is not active against heparin sodium salt (HS). Involved in the pathogenesis of vancomycin-resistant E.faecalis infections. Contributes to attenuation of the lipopolysaccharide (LPS)-mediated nuclear factor (NF)-kappa-B activation assayed in the mouse RAW-Blue reporter macrophages. This Enterococcus faecalis (strain ATCC 700802 / V583) protein is Hyaluronate lyase HylB.